The sequence spans 163 residues: Nucleotide-binding protein AM1_1863 (163 aa).

The protein belongs to the YajQ family.

In terms of biological role, nucleotide-binding protein. The protein is Nucleotide-binding protein AM1_1863 of Acaryochloris marina (strain MBIC 11017).